Here is a 314-residue protein sequence, read N- to C-terminus: Small ribosomal subunit protein uS2 (314 aa).

Composition is skewed to basic and acidic residues over residues 244-265 and 271-287; these read GGHDERREQEDRDAASERGHKD and DRRGGPRERREPREDRA. The segment at 244 to 314 is disordered; it reads GGHDERREQE…AAPEAAPAKE (71 aa). Positions 302 to 314 are enriched in low complexity; it reads APAAAPEAAPAKE.

This sequence belongs to the universal ribosomal protein uS2 family.

This is Small ribosomal subunit protein uS2 from Anaeromyxobacter dehalogenans (strain 2CP-C).